A 74-amino-acid polypeptide reads, in one-letter code: Antimicrobial peptide 36.4 (74 aa).

An N-terminal signal peptide occupies residues 1–22 (MKVNVLLAVFLVVMVVTDHCHA). Lys-39 is subject to Lysine amide. The propeptide occupies 44 to 74 (LQMEARFQPQNKNYRKRELDLENLFTHMPDY).

Belongs to the non-disulfide-bridged peptide (NDBP) superfamily. Short antimicrobial peptide (group 4) family. As to expression, expressed by the venom gland.

It localises to the secreted. The protein resides in the target cell membrane. Its function is as follows. Cationic host defense peptide that have antibacterial activity by breaking membranes. Is more effective on Gram-positive than on Gram-negative bacteria. The polypeptide is Antimicrobial peptide 36.4 (Lychas mucronatus (Chinese swimming scorpion)).